Reading from the N-terminus, the 638-residue chain is DNA gyrase subunit B (638 aa).

Residues 423-537 (CEVYIVEGDS…KGHVYLAMPP (115 aa)) form the Toprim domain. Glu429, Asp502, and Asp504 together coordinate Mg(2+).

This sequence belongs to the type II topoisomerase GyrB family. In terms of assembly, heterotetramer, composed of two GyrA and two GyrB chains. In the heterotetramer, GyrA contains the active site tyrosine that forms a transient covalent intermediate with DNA, while GyrB binds cofactors and catalyzes ATP hydrolysis. Mg(2+) is required as a cofactor. The cofactor is Mn(2+). It depends on Ca(2+) as a cofactor.

Its subcellular location is the cytoplasm. It carries out the reaction ATP-dependent breakage, passage and rejoining of double-stranded DNA.. Its function is as follows. A type II topoisomerase that negatively supercoils closed circular double-stranded (ds) DNA in an ATP-dependent manner to modulate DNA topology and maintain chromosomes in an underwound state. Negative supercoiling favors strand separation, and DNA replication, transcription, recombination and repair, all of which involve strand separation. Also able to catalyze the interconversion of other topological isomers of dsDNA rings, including catenanes and knotted rings. Type II topoisomerases break and join 2 DNA strands simultaneously in an ATP-dependent manner. This Treponema denticola (strain ATCC 35405 / DSM 14222 / CIP 103919 / JCM 8153 / KCTC 15104) protein is DNA gyrase subunit B.